Reading from the N-terminus, the 285-residue chain is Polyamine aminopropyltransferase (285 aa).

Residues 5 to 241 (DSWFTEHFQA…GWWSVTLSSK (237 aa)) form the PABS domain. Gln35 contacts S-methyl-5'-thioadenosine. His66 and Asp90 together coordinate spermidine. S-methyl-5'-thioadenosine is bound by residues Asp110 and 141–142 (DG). Asp160 functions as the Proton acceptor in the catalytic mechanism. 160–163 (DSTD) is a binding site for spermidine. Pro167 is an S-methyl-5'-thioadenosine binding site.

This sequence belongs to the spermidine/spermine synthase family. As to quaternary structure, homodimer or homotetramer.

It is found in the cytoplasm. The enzyme catalyses S-adenosyl 3-(methylsulfanyl)propylamine + putrescine = S-methyl-5'-thioadenosine + spermidine + H(+). The protein operates within amine and polyamine biosynthesis; spermidine biosynthesis; spermidine from putrescine: step 1/1. In terms of biological role, catalyzes the irreversible transfer of a propylamine group from the amino donor S-adenosylmethioninamine (decarboxy-AdoMet) to putrescine (1,4-diaminobutane) to yield spermidine. This is Polyamine aminopropyltransferase from Xylella fastidiosa (strain 9a5c).